Here is a 188-residue protein sequence, read N- to C-terminus: Trafficking protein particle complex subunit 5 (188 aa).

Ser-10 carries the post-translational modification Phosphoserine.

It belongs to the TRAPP small subunits family. BET3 subfamily. In terms of assembly, component of the multisubunit TRAPP (transport protein particle) complex, which includes at least TRAPPC2, TRAPPC2L, TRAPPC3, TRAPPC3L, TRAPPC4, TRAPPC5, TRAPPC8, TRAPPC9, TRAPPC10, TRAPPC11 and TRAPPC12.

The protein localises to the golgi apparatus. The protein resides in the cis-Golgi network. Its subcellular location is the endoplasmic reticulum. Its function is as follows. May play a role in vesicular transport from endoplasmic reticulum to Golgi. The polypeptide is Trafficking protein particle complex subunit 5 (Trappc5) (Mus musculus (Mouse)).